Reading from the N-terminus, the 716-residue chain is DNA helicase/primase complex-associated protein (716 aa).

The protein belongs to the herpesviridae HEPA family. In terms of assembly, associates with the primase and the helicase to form the helicase-primase complex. Interacts with the origin-binding protein. Interacts with the polymerase catalytic subunit.

The protein localises to the host nucleus. Its function is as follows. Component of the helicase/primase complex. Unwinds the DNA at the replication forks and generates single-stranded DNA for both leading and lagging strand synthesis. The primase synthesizes short RNA primers on the lagging strand that the polymerase presumably elongates using dNTPs. The primase-associated factor has no known catalytic activity in the complex and may serve to facilitate the formation of the replisome by directly interacting with the origin-binding protein and the polymerase. The protein is DNA helicase/primase complex-associated protein of Equus caballus (Horse).